A 145-amino-acid polypeptide reads, in one-letter code: Superoxide dismutase [Mn/Fe] (145 aa).

Residues H10 and H64 each contribute to the Fe(3+) site. Residues H10 and H64 each coordinate Mn(2+).

It belongs to the iron/manganese superoxide dismutase family. The cofactor is Mn(2+). Requires Fe(3+) as cofactor.

It catalyses the reaction 2 superoxide + 2 H(+) = H2O2 + O2. Functionally, destroys superoxide anion radicals which are normally produced within the cells and which are toxic to biological systems. Catalyzes the dismutation of superoxide anion radicals into O2 and H2O2 by successive reduction and oxidation of the transition metal ion at the active site. This Streptococcus acidominimus protein is Superoxide dismutase [Mn/Fe] (sodA).